The following is a 259-amino-acid chain: Major prion protein (259 aa).

An N-terminal signal peptide occupies residues Met1–Cys24. The segment at Lys25–Tyr235 is interaction with GRB2, ERI3 and SYN1. Residues Pro29–Pro110 form a disordered region. The Cu(2+) site is built by Gly63, Gly64, His72, Gly74, His82, Gly84, His92, and Gly94. The segment covering Pro91 to Gly101 has biased composition (gly residues). A disulfide bridge links Cys184 with Cys219. Residues Asn186 and Asn202 are each glycosylated (N-linked (GlcNAc...) asparagine). Asn236 carries the GPI-anchor amidated asparagine lipid modification. Positions Met237–Ser259 are cleaved as a propeptide — removed in mature form.

The protein belongs to the prion family. As to quaternary structure, monomer and homodimer. Has a tendency to aggregate into amyloid fibrils containing a cross-beta spine, formed by a steric zipper of superposed beta-strands. Soluble oligomers may represent an intermediate stage on the path to fibril formation. Copper binding may promote oligomerization. Interacts with GRB2, APP, ERI3/PRNPIP and SYN1. Mislocalized cytosolically exposed PrP interacts with MGRN1; this interaction alters MGRN1 subcellular location and causes lysosomal enlargement. Interacts with KIAA1191.

Its subcellular location is the cell membrane. It is found in the golgi apparatus. Its function is as follows. Its primary physiological function is unclear. Has cytoprotective activity against internal or environmental stresses. May play a role in neuronal development and synaptic plasticity. May be required for neuronal myelin sheath maintenance. May play a role in iron uptake and iron homeostasis. Soluble oligomers are toxic to cultured neuroblastoma cells and induce apoptosis (in vitro). Association with GPC1 (via its heparan sulfate chains) targets PRNP to lipid rafts. Also provides Cu(2+) or Zn(2+) for the ascorbate-mediated GPC1 deaminase degradation of its heparan sulfate side chains. The protein is Major prion protein (PRNP) of Trichosurus vulpecula (Brush-tailed possum).